The chain runs to 906 residues: MLSILKKLFGTANDRTVKKLFSEITKINSLEPVIQKLSDEELKNKTVEFKEKLKNGATLDDILYEAFAVVRESARRVCGMRHFDVQLIGGLILHQGMITEMRTGEGKTLVATLPAYLNALTGKGVHVVTVNDYLASRDSASMGKIYNFLGLSVGCIVAGMSDEAKRAAYNADITHATNNELGFDYLRDNMKYSIQERVLRPFNFAIIDEVDSILIDEARTPLVISGPVNDNSELYTKIDKIVRQLKAGDFEKDEKLKTIHLTELGITHIESLLSNENIIKPDSGLYDFENLTLVHYINQALRAHNMFNVDVDYLVRDGQVMIIDEFTGRVMEGRRYSEGLHQALEAKENVKIQNENQTLASITFQNYFRNYPKLSGMTGTAMTEAPELKDIYNLDVVAVPTHNKVTRVDLDDEIYGSKKEKYDAILKLIKDCYNRGQPILVGTISIEKSEELSSVLNKEKIPHKILNAKFHEQEAFIIAQAGRFRAVTIATNMAGRGTDIMLGGNPEMLIEQLAKDHSYEAKIAEIKAQIAEEKKKVIEAGGLFVIGTERHESRRIDNQLRGRSGRQGDPGKTQFFLSLDDDLMRIFASERISGVLRTLGLKDGEAIHHPMISRSLEKAQQKVEGHNYEIRKNLLRFDDVMNDQRKIIYEQRTEIIKSKDSYDFLNSTTAELAKKIVLTFMPAGSYREDWDIENLSVELHRIFSIKFDHNLVSKNDVTEEEITKSVIQMAHDIYKSKEESYSSELMHNAVKYILLTTLDQVWKDHLYSLDHLRQGISLRAYAQQDPLSEYKREAFNLFEQMLDNLKELFIQTVYHFHIDLKHVQKEDVSLEHKKFQKNMQESREDPAFSKYNAGSSLEIDLKPVVSRIDPKDRNPEDPTSWGRVSRNELCPCRSGKKYKYCHGANA.

Residues glutamine 86, 104 to 108 (GEGKT), and aspartate 499 contribute to the ATP site. Residues 865 to 885 (VSRIDPKDRNPEDPTSWGRVS) are disordered. Zn(2+)-binding residues include cysteine 890, cysteine 892, cysteine 901, and histidine 902.

It belongs to the SecA family. Monomer and homodimer. Part of the essential Sec protein translocation apparatus which comprises SecA, SecYEG and auxiliary proteins SecDF-YajC and YidC. Zn(2+) serves as cofactor.

The protein localises to the cell inner membrane. The protein resides in the cytoplasm. It carries out the reaction ATP + H2O + cellular proteinSide 1 = ADP + phosphate + cellular proteinSide 2.. Part of the Sec protein translocase complex. Interacts with the SecYEG preprotein conducting channel. Has a central role in coupling the hydrolysis of ATP to the transfer of proteins into and across the cell membrane, serving both as a receptor for the preprotein-SecB complex and as an ATP-driven molecular motor driving the stepwise translocation of polypeptide chains across the membrane. This is Protein translocase subunit SecA from Rickettsia canadensis (strain McKiel).